A 332-amino-acid polypeptide reads, in one-letter code: Geranylgeranyl pyrophosphate synthase 2 (332 aa).

Positions 55, 58, and 87 each coordinate isopentenyl diphosphate. Asp-94 and Asp-98 together coordinate Mg(2+). Arg-103 lines the dimethylallyl diphosphate pocket. Arg-104 is a binding site for isopentenyl diphosphate. Lys-181, Thr-182, and Gln-218 together coordinate dimethylallyl diphosphate. Position 221 (Asp-221) interacts with Mg(2+). Dimethylallyl diphosphate is bound by residues Asn-225, Lys-235, and Lys-245.

Belongs to the FPP/GGPP synthase family. Requires Mg(2+) as cofactor.

The enzyme catalyses isopentenyl diphosphate + dimethylallyl diphosphate = (2E)-geranyl diphosphate + diphosphate. It catalyses the reaction isopentenyl diphosphate + (2E)-geranyl diphosphate = (2E,6E)-farnesyl diphosphate + diphosphate. The catalysed reaction is isopentenyl diphosphate + (2E,6E)-farnesyl diphosphate = (2E,6E,10E)-geranylgeranyl diphosphate + diphosphate. Geranylgeranyl pyrophosphate synthase; part of the gene cluster 3 that mediates the biosynthesis of an isoprenoid secondary metabolite. The chain is Geranylgeranyl pyrophosphate synthase 2 (GGS2) from Zymoseptoria tritici (strain CBS 115943 / IPO323) (Speckled leaf blotch fungus).